Consider the following 494-residue polypeptide: MSTGTFVVSQPLNYRGGARVEPADASGTEKAFEPATGRVIATFTCSGEKEVNLAVQNAKAAFKIWSQKSGMERCRILLEAARIIREREDEIATMECINNGKSIFEARLDIDISWQCLEYYAGLAASMAGEHIQLPGGSFGYTRREPLGVCVGIGAWNYPFQIASWKSAPALACGNAMVFKPSPFTPVSALLLAEIYSEAGVPPGLFNVVQGGAATGQFLCQHPDVAKVSFTGSVPTGMKIMEMSAKGIKPVTLELGGKSPLIIFSDCDMNNAVKGALMANFLTQGQVCCNGTRVFVQKEILDKFTEEVVKQTQRIKIGDPLLEDTRMGPLINRPHLERVLGFVKVAKEQGAKVLCGGDIYVPEDPKLKDGYYMRPCVLTNCRDDMTCVKEEIFGPVMSILSFDTEAEVLERANDTTFGLAAGVFTRDIQRAHRVVAELQAGTCFINNYNVSPVELPFGGYKKSGFGRENGRVTIEYYSQLKTVCVEMGDVESAF.

Position 2 is an N-acetylserine; in 4-trimethylaminobutyraldehyde dehydrogenase, N-terminally processed (Ser2). Lys30 carries the post-translational modification N6-acetyllysine; alternate. Lys30 bears the N6-succinyllysine; alternate mark. An N6-succinyllysine modification is found at Lys59. Residues Lys180 and 232–236 (GSVPT) contribute to the NAD(+) site. Glu254 (proton acceptor) is an active-site residue. Residue Cys288 is the Nucleophile of the active site. Lys298 is subject to N6-acetyllysine. Lys303 carries the N6-acetyllysine; alternate modification. Position 303 is an N6-succinyllysine; alternate (Lys303). The residue at position 344 (Lys344) is an N6-acetyllysine. Glu391 contacts NAD(+).

Belongs to the aldehyde dehydrogenase family. As to quaternary structure, homotetramer. As to expression, detected in brain (at protein level). High expression in adult liver, skeletal muscle, and kidney. Low levels in heart, pancreas, lung and brain. Expressed in all regions of the brain. Expression levels are variable in the different brain areas, with the highest levels in the spinal cord and the lowest in the occipital pole.

The protein resides in the cytoplasm. Its subcellular location is the cytosol. The enzyme catalyses 4-(trimethylamino)butanal + NAD(+) + H2O = 4-(trimethylamino)butanoate + NADH + 2 H(+). It carries out the reaction an aldehyde + NAD(+) + H2O = a carboxylate + NADH + 2 H(+). It catalyses the reaction 4-aminobutanal + NAD(+) + H2O = 4-aminobutanoate + NADH + 2 H(+). The catalysed reaction is formaldehyde + NAD(+) + H2O = formate + NADH + 2 H(+). The enzyme catalyses acetaldehyde + NAD(+) + H2O = acetate + NADH + 2 H(+). It carries out the reaction imidazole-4-acetaldehyde + NAD(+) + H2O = imidazole-4-acetate + NADH + 2 H(+). It catalyses the reaction acrolein + NAD(+) + H2O = acrylate + NADH + 2 H(+). The catalysed reaction is (5-hydroxyindol-3-yl)acetaldehyde + NAD(+) + H2O = (5-hydroxyindol-3-yl)acetate + NADH + 2 H(+). The enzyme catalyses 3,4-dihydroxyphenylacetaldehyde + NAD(+) + H2O = 3,4-dihydroxyphenylacetate + NADH + 2 H(+). It carries out the reaction spermine monoaldehyde + NAD(+) + H2O = N-(2-carboxyethyl)spermidine + NADH + 2 H(+). It catalyses the reaction propanal + NAD(+) + H2O = propanoate + NADH + 2 H(+). The catalysed reaction is butanal + NAD(+) + H2O = butanoate + NADH + 2 H(+). The enzyme catalyses pentanal + NAD(+) + H2O = pentanoate + NADH + 2 H(+). It carries out the reaction hexanal + NAD(+) + H2O = hexanoate + NADH + 2 H(+). It functions in the pathway amine and polyamine biosynthesis; carnitine biosynthesis. Functionally, converts gamma-trimethylaminobutyraldehyde into gamma-butyrobetaine with high efficiency (in vitro). Can catalyze the irreversible oxidation of a broad range of aldehydes to the corresponding acids in an NAD-dependent reaction, but with low efficiency. Catalyzes the oxidation of aldehydes arising from biogenic amines and polyamines. This chain is 4-trimethylaminobutyraldehyde dehydrogenase (ALDH9A1), found in Homo sapiens (Human).